A 699-amino-acid chain; its full sequence is Osmotic avoidance abnormal protein 3 (699 aa).

Positions 4-327 (SVRVAVRCRP…LRYANRAKNI (324 aa)) constitute a Kinesin motor domain. 87-94 (GQTGSGKT) provides a ligand contact to ATP. Positions 339–523 (DALLREYQEE…EIEDLHGEFE (185 aa)) form a coiled coil.

This sequence belongs to the TRAFAC class myosin-kinesin ATPase superfamily. Kinesin family. Kinesin II subfamily. Expressed in an exclusive set of 26 chemosensory neurons whose dendritic endings are exposed to the external environment; six IL2 neurons of the inner labial sensilla, 8 pairs of amphid neurons in the head, and 2 pairs of phasmid neurons in the tail.

It localises to the cytoplasm. The protein localises to the cytoskeleton. The protein resides in the cell projection. Its subcellular location is the cilium. It is found in the cilium axoneme. It localises to the cilium basal body. Kinesin motor protein which is required for the anterograde intraflagellar transport (IFT) along the middle segment of the sensory neuron cilia together with the kinesin II motor complex (composed of klp-11, klp-20 and kap-1) and on its own, is required for IFT along the distal segment. In addition, regulates the length of cilia. May have a role during neurogenesis and axonal transport. The sequence is that of Osmotic avoidance abnormal protein 3 from Caenorhabditis elegans.